A 750-amino-acid chain; its full sequence is E3 ubiquitin-protein ligase rfwd3.S (750 aa).

The disordered stretch occupies residues 92-206 (RQAAEQRSSV…GAAPPAEPAP (115 aa)). A compositionally biased stretch (basic residues) spans 105–116 (RVQRRSTRRHQR). Over residues 122-144 (TAGTSSRAALSNFFQINRTQGVA) the composition is skewed to polar residues. Residues 168–181 (SSDETVELSEEEEG) are compositionally biased toward acidic residues. The segment at 263–307 (CAICFEPWTNAGQHRLSALRCGHLFGFTCIERWLKGGAAKCPQCN) adopts an RING-type; degenerate zinc-finger fold. Positions 387 to 405 (TSMQASSSRSTISGSLSSS) are enriched in low complexity. The segment at 387–406 (TSMQASSSRSTISGSLSSSQ) is disordered. WD repeat units follow at residues 470–510 (IHSK…VVQT), 512–552 (NTGR…NCVQ), and 558–603 (GSRC…YRPH).

It depends on [4Fe-4S] cluster as a cofactor.

The protein resides in the nucleus. It is found in the PML body. It localises to the cytoplasm. The catalysed reaction is S-ubiquitinyl-[E2 ubiquitin-conjugating enzyme]-L-cysteine + [acceptor protein]-L-lysine = [E2 ubiquitin-conjugating enzyme]-L-cysteine + N(6)-ubiquitinyl-[acceptor protein]-L-lysine.. It functions in the pathway protein modification; protein ubiquitination. In terms of biological role, E3 ubiquitin-protein ligase required for the repair of DNA interstrand cross-links (ICL) in response to DNA damage. Plays a key role in RPA-mediated DNA damage signaling and repair. Required to translesion DNA synthesis across DNA-protein cross-link adducts by catalyzing ubiquitination of proteins on single-stranded DNA (ssDNA). Mediates ubiquitination of the hmces DNA-protein cross-link, possibly promoting its degradation. In Xenopus laevis (African clawed frog), this protein is E3 ubiquitin-protein ligase rfwd3.S (rfwd3.S).